An 86-amino-acid polypeptide reads, in one-letter code: Small ribosomal subunit protein bS16 (86 aa).

This sequence belongs to the bacterial ribosomal protein bS16 family.

The protein is Small ribosomal subunit protein bS16 of Xylella fastidiosa (strain M23).